A 370-amino-acid chain; its full sequence is Spermidine/putrescine import ATP-binding protein PotA 1 (370 aa).

Positions 12 to 250 (VSIRAVRKVY…PGNRFVADFI (239 aa)) constitute an ABC transporter domain. 48–55 (GPSGCGKT) contacts ATP.

It belongs to the ABC transporter superfamily. Spermidine/putrescine importer (TC 3.A.1.11.1) family. In terms of assembly, the complex is composed of two ATP-binding proteins (PotA), two transmembrane proteins (PotB and PotC) and a solute-binding protein (PotD).

The protein localises to the cell inner membrane. It carries out the reaction ATP + H2O + polyamine-[polyamine-binding protein]Side 1 = ADP + phosphate + polyamineSide 2 + [polyamine-binding protein]Side 1.. In terms of biological role, part of the ABC transporter complex PotABCD involved in spermidine/putrescine import. Responsible for energy coupling to the transport system. This is Spermidine/putrescine import ATP-binding protein PotA 1 from Pseudomonas aeruginosa (strain ATCC 15692 / DSM 22644 / CIP 104116 / JCM 14847 / LMG 12228 / 1C / PRS 101 / PAO1).